The following is a 450-amino-acid chain: Chromosomal replication initiator protein DnaA (450 aa).

A domain I, interacts with DnaA modulators region spans residues 1–71; the sequence is MEDVWLQAQS…SVRSLTDSHF (71 aa). The segment at 71 to 113 is domain II; it reads FQVELQVAARQQEKTAKSPRKSHTEDELGPVESEKCAPAEFST. Positions 82–103 are disordered; that stretch reads QEKTAKSPRKSHTEDELGPVES. Positions 114–330 are domain III, AAA+ region; that stretch reads NLNAKYTFDT…GMLIRLGAVA (217 aa). The ATP site is built by glycine 158, glycine 160, lysine 161, and threonine 162. Residues 331–450 form a domain IV, binds dsDNA region; it reads SLTGKNITLD…IETLRKGLLN (120 aa).

This sequence belongs to the DnaA family. As to quaternary structure, oligomerizes as a right-handed, spiral filament on DNA at oriC.

It is found in the cytoplasm. Plays an essential role in the initiation and regulation of chromosomal replication. ATP-DnaA binds to the origin of replication (oriC) to initiate formation of the DNA replication initiation complex once per cell cycle. Binds the DnaA box (a 9 base pair repeat at the origin) and separates the double-stranded (ds)DNA. Forms a right-handed helical filament on oriC DNA; dsDNA binds to the exterior of the filament while single-stranded (ss)DNA is stabiized in the filament's interior. The ATP-DnaA-oriC complex binds and stabilizes one strand of the AT-rich DNA unwinding element (DUE), permitting loading of DNA polymerase. After initiation quickly degrades to an ADP-DnaA complex that is not apt for DNA replication. Binds acidic phospholipids. This chain is Chromosomal replication initiator protein DnaA, found in Geobacter metallireducens (strain ATCC 53774 / DSM 7210 / GS-15).